The following is a 203-amino-acid chain: B-cell CLL/lymphoma 7 protein family member B-A (203 aa).

Disordered regions lie at residues Lys-55 to Asp-80 and Ser-94 to Glu-148. Low complexity predominate over residues Ala-109–Ser-129.

The protein belongs to the BCL7 family.

The polypeptide is B-cell CLL/lymphoma 7 protein family member B-A (bcl7ba) (Danio rerio (Zebrafish)).